The primary structure comprises 286 residues: MNTVKTVRELRAAVARARSEGKRIGFVPTMGNLHSGHAALVAKAAQRVDFVVASIFVNPLQFGAGEDLDKYPRTLAADQEKLLEAGCHLLFAPTVEEMYPDGMAGQTRVSVPQLSEGLCGASRPGHFEGVATVVSKLFNMVQPDLAVFGQKDYQQLAVIRALVHDLNMPIQIIGEPTVRAADGLALSSRNGYLSEEQRAIAPVLYRSLSQIAQAIRNGERDYPKLVAEQQQQLEAAGLRRDYLEIRQAQNLRPATAQDRELVILVAAYLGATRLIDNLHLDLDTPA.

30–37 (MGNLHSGH) provides a ligand contact to ATP. The active-site Proton donor is the histidine 37. Glutamine 61 is a (R)-pantoate binding site. Position 61 (glutamine 61) interacts with beta-alanine. 149-152 (GQKD) provides a ligand contact to ATP. Position 155 (glutamine 155) interacts with (R)-pantoate. ATP is bound by residues valine 178 and 186–189 (LSSR).

It belongs to the pantothenate synthetase family. Homodimer.

It is found in the cytoplasm. The catalysed reaction is (R)-pantoate + beta-alanine + ATP = (R)-pantothenate + AMP + diphosphate + H(+). Its pathway is cofactor biosynthesis; (R)-pantothenate biosynthesis; (R)-pantothenate from (R)-pantoate and beta-alanine: step 1/1. Its function is as follows. Catalyzes the condensation of pantoate with beta-alanine in an ATP-dependent reaction via a pantoyl-adenylate intermediate. The chain is Pantothenate synthetase from Pseudomonas fluorescens (strain ATCC BAA-477 / NRRL B-23932 / Pf-5).